The following is a 338-amino-acid chain: tRNA N6-adenosine threonylcarbamoyltransferase (338 aa).

Fe cation is bound by residues H109 and H113. Substrate is bound by residues 132-136, D165, G178, and N277; that span reads AISGA. D302 is a binding site for Fe cation.

It belongs to the KAE1 / TsaD family. Requires Fe(2+) as cofactor.

It localises to the cytoplasm. The enzyme catalyses L-threonylcarbamoyladenylate + adenosine(37) in tRNA = N(6)-L-threonylcarbamoyladenosine(37) in tRNA + AMP + H(+). Functionally, required for the formation of a threonylcarbamoyl group on adenosine at position 37 (t(6)A37) in tRNAs that read codons beginning with adenine. Is involved in the transfer of the threonylcarbamoyl moiety of threonylcarbamoyl-AMP (TC-AMP) to the N6 group of A37, together with TsaE and TsaB. TsaD likely plays a direct catalytic role in this reaction. This Chlamydia trachomatis serovar A (strain ATCC VR-571B / DSM 19440 / HAR-13) protein is tRNA N6-adenosine threonylcarbamoyltransferase.